The following is a 135-amino-acid chain: Large ribosomal subunit protein uL16c (135 aa).

Belongs to the universal ribosomal protein uL16 family. Part of the 50S ribosomal subunit.

The protein resides in the plastid. It localises to the chloroplast. In Euglena gracilis, this protein is Large ribosomal subunit protein uL16c.